The primary structure comprises 554 residues: Myo-inositol transporter 1 (554 aa).

Positions 1-13 are enriched in polar residues; sequence MGSSTNNTQSKAT. A disordered region spans residues 1 to 57; the sequence is MGSSTNNTQSKATPSVLENEVNSSKSSVVSSTSSAKGLLRETTNHGTMETSSVQISE. 2 N-linked (GlcNAc...) asparagine glycosylation sites follow: Asn-6 and Asn-22. Positions 15–34 are enriched in low complexity; sequence SVLENEVNSSKSSVVSSTSS. Over residues 44–57 the composition is skewed to polar residues; sequence NHGTMETSSVQISE. Helical transmembrane passes span 65–85, 110–130, 144–164, 167–187, 196–216, and 227–247; these read MVLV…YDTG, FITS…GVLA, IIFV…TMIA, FVLG…ISEL, LIVT…FINW, and VSVG…WFLP. N-linked (GlcNAc...) asparagine glycosylation is present at Asn-279. The chain crosses the membrane as a helical span at residues 313–332; that stretch reads GNFRALILACGLQGIQQFTG. N-linked (GlcNAc...) asparagine glycosylation is present at Asn-351. A run of 5 helical transmembrane segments spans residues 354–374, 382–402, 420–440, 459–479, and 490–510; these read AVSI…ICII, ILLV…VAFH, GWGI…AIGI, IGAM…ASTF, and GTFS…YFLL.

Belongs to the major facilitator superfamily. Sugar transporter (TC 2.A.1.1) family.

It is found in the cell membrane. The catalysed reaction is myo-inositol(out) + H(+)(out) = myo-inositol(in) + H(+)(in). Major transporter for myo-inositol. This Candida albicans (strain SC5314 / ATCC MYA-2876) (Yeast) protein is Myo-inositol transporter 1.